The primary structure comprises 56 residues: Large ribosomal subunit protein bL32 (56 aa).

A compositionally biased stretch (basic residues) spans 1–16 (MAVQKSKKSRSRRDMR). A disordered region spans residues 1–56 (MAVQKSKKSRSRRDMRRSHDAIDGPTLSVDSTTGETHRRHHVTADGYYKGRKVVNK).

The protein belongs to the bacterial ribosomal protein bL32 family.

The protein is Large ribosomal subunit protein bL32 of Idiomarina loihiensis (strain ATCC BAA-735 / DSM 15497 / L2-TR).